Consider the following 361-residue polypeptide: Ribosomal RNA large subunit methyltransferase M (361 aa).

Residues serine 187, 220–223, aspartate 239, aspartate 259, and aspartate 276 contribute to the S-adenosyl-L-methionine site; that span reads CPGG. Lysine 305 serves as the catalytic Proton acceptor.

The protein belongs to the class I-like SAM-binding methyltransferase superfamily. RNA methyltransferase RlmE family. RlmM subfamily. In terms of assembly, monomer.

The protein resides in the cytoplasm. The enzyme catalyses cytidine(2498) in 23S rRNA + S-adenosyl-L-methionine = 2'-O-methylcytidine(2498) in 23S rRNA + S-adenosyl-L-homocysteine + H(+). Catalyzes the 2'-O-methylation at nucleotide C2498 in 23S rRNA. This Shewanella baltica (strain OS185) protein is Ribosomal RNA large subunit methyltransferase M.